The sequence spans 377 residues: MSNTKDNFNVADLTAALNAGDRADLVNVLKNKLHDLTGKHSNVTESLSPNVRKRVEALREIQTEHDELEAKFFEERAALEAKYQKLYQPLYTKRFEIVNGVVEVDGATTEAAAADKQEDKDAVEKGVPDFWLTAMKNNEVLAEEITERDEEALKFLRDIKWSRIDDPKGFKLDFFFETNPYFKNSVLTKTYHMIDEDEPILEKAIATEIEWYPGKCLTQKILKKKPKKGSKNAKPITKTEQCESFFNFFSPPQVPEDEEDIDEDAAEELQNLMEQDYDIGSTIRDKIIPHAVSWFTGEAAEDDYAELEDDEDEDDDEEDDEDEDEEEEDEEDDEDEEEDEDETKTKKKTSAVPKKSGRVPAAADGQSGERPPECKQQ.

Residues 26–80 (VNVLKNKLHDLTGKHSNVTESLSPNVRKRVEALREIQTEHDELEAKFFEERAALE) are a coiled coil. Residues 47 to 62 (LSPNVRKRVEALREIQ) carry the Nuclear export signal motif. The short motif at 223 to 228 (KKKPKK) is the Nuclear localization signal element. A disordered region spans residues 298-377 (EAAEDDYAEL…GERPPECKQQ (80 aa)). Residues 299–342 (AAEDDYAELEDDEDEDDDEEDDEDEDEEEEDEEDDEDEEEDEDE) show a composition bias toward acidic residues. At C374 the chain carries Cysteine methyl ester. C374 carries S-farnesyl cysteine lipidation. A propeptide spans 375 to 377 (KQQ) (removed in mature form).

Belongs to the nucleosome assembly protein (NAP) family. As to quaternary structure, binds preferentially histone H1 in vitro. Interacts with CYCB1;1.

It is found in the nucleus. The protein resides in the cytoplasm. In terms of biological role, may modulate chromatin structure by regulation of nucleosome assembly/disassembly. Could function together with B-type cyclins in the regulation of microtubule dynamics. This is Nucleosome assembly protein 1;2 (NAP1;2) from Nicotiana tabacum (Common tobacco).